We begin with the raw amino-acid sequence, 92 residues long: Small ribosomal subunit protein uS19c (92 aa).

This sequence belongs to the universal ribosomal protein uS19 family.

It is found in the plastid. The protein localises to the chloroplast. Protein S19 forms a complex with S13 that binds strongly to the 16S ribosomal RNA. The protein is Small ribosomal subunit protein uS19c of Tupiella akineta (Green alga).